We begin with the raw amino-acid sequence, 150 residues long: MLGAALRRCAVAATTRAGPRGLLHSARTPGPAAAIQSVRCYSHGSQETDEEFDARWVTYFNKPDIDAWELRKGINTLVTYDMVPEPKIIDAALRACRRLNEFASTVRILEAVKDKAGPHKEIYPYVIQELRPTLNELGISTPEELGLDKV.

The transit peptide at 1 to 41 (MLGAALRRCAVAATTRAGPRGLLHSARTPGPAAAIQSVRCY) directs the protein to the mitochondrion. The SIFI-degron signature appears at 2-17 (LGAALRRCAVAATTRA). N6-acetyllysine occurs at positions 87 and 113. Phosphothreonine is present on T141.

The protein belongs to the cytochrome c oxidase subunit 5A family. Component of the cytochrome c oxidase (complex IV, CIV), a multisubunit enzyme composed of 14 subunits. The complex is composed of a catalytic core of 3 subunits MT-CO1, MT-CO2 and MT-CO3, encoded in the mitochondrial DNA, and 11 supernumerary subunits COX4I, COX5A, COX5B, COX6A, COX6B, COX6C, COX7A, COX7B, COX7C, COX8 and NDUFA4, which are encoded in the nuclear genome. The complex exists as a monomer or a dimer and forms supercomplexes (SCs) in the inner mitochondrial membrane with NADH-ubiquinone oxidoreductase (complex I, CI) and ubiquinol-cytochrome c oxidoreductase (cytochrome b-c1 complex, complex III, CIII), resulting in different assemblies (supercomplex SCI(1)III(2)IV(1) and megacomplex MCI(2)III(2)IV(2)). Interacts with AFG1L. Interacts with RAB5IF. In terms of processing, in response to mitochondrial stress, the precursor protein is ubiquitinated by the SIFI complex in the cytoplasm before mitochondrial import, leading to its degradation. Within the SIFI complex, UBR4 initiates ubiquitin chain that are further elongated or branched by KCMF1.

The protein localises to the mitochondrion inner membrane. The protein operates within energy metabolism; oxidative phosphorylation. Its function is as follows. Component of the cytochrome c oxidase, the last enzyme in the mitochondrial electron transport chain which drives oxidative phosphorylation. The respiratory chain contains 3 multisubunit complexes succinate dehydrogenase (complex II, CII), ubiquinol-cytochrome c oxidoreductase (cytochrome b-c1 complex, complex III, CIII) and cytochrome c oxidase (complex IV, CIV), that cooperate to transfer electrons derived from NADH and succinate to molecular oxygen, creating an electrochemical gradient over the inner membrane that drives transmembrane transport and the ATP synthase. Cytochrome c oxidase is the component of the respiratory chain that catalyzes the reduction of oxygen to water. Electrons originating from reduced cytochrome c in the intermembrane space (IMS) are transferred via the dinuclear copper A center (CU(A)) of subunit 2 and heme A of subunit 1 to the active site in subunit 1, a binuclear center (BNC) formed by heme A3 and copper B (CU(B)). The BNC reduces molecular oxygen to 2 water molecules using 4 electrons from cytochrome c in the IMS and 4 protons from the mitochondrial matrix. This is Cytochrome c oxidase subunit 5A, mitochondrial (COX5A) from Gorilla gorilla gorilla (Western lowland gorilla).